Reading from the N-terminus, the 82-residue chain is MENGATSQSEGKDPSGFLSEIIGNPVTVKLNSGVVYKGELQSVDGYMNIALEKTEEFINGVKRRSYGDAFVRGNNVMYISAD.

The region spanning D13 to D82 is the Sm domain.

Belongs to the snRNP Sm proteins family. SmF/LSm6 subfamily. In terms of assembly, component of the heptameric LSM1-LSM7 complex, which consists of snr-1/lsm1, snr-2/lsm2, snr-3/lsm3, snr-4/lsm4, snr-5/lsm5, snr-6/lsm6 and snr-7/lsm7. Component of the heptameric LSM2-LSM8 complex, which consists of snr-2/lsm2, snr-3/lsm3, snr-4/lsm4, snr-5/lsm5, snr-6/lsm6, snr-7/lsm7 and snr-8/lsm8. The LSm subunits form a seven-membered ring structure with a doughnut shape.

It localises to the cytoplasm. The protein localises to the nucleus. Component of LSm protein complexes, which are involved in RNA processing and may function in a chaperone-like manner, facilitating the efficient association of RNA processing factors with their substrates. Component of the cytoplasmic LSM1-LSM7 complex, which is thought to be involved in mRNA degradation by activating the decapping step in the 5'-to-3' mRNA decay pathway. Component of the nuclear LSM2-LSM8 complex, which is involved in splicing of nuclear mRNAs. LSM2-LSM8 associates with multiple snRNP complexes containing the U6 snRNA (U4/U6 di-snRNP, spliceosomal U4/U6.U5 tri-snRNP, and free U6 snRNP). It binds directly to the 3'-terminal U-tract of U6 snRNA and plays a role in the biogenesis and stability of the U6 snRNP and U4/U6 snRNP complexes. LSM2-LSM8 probably also is involved degradation of nuclear pre-mRNA by targeting them for decapping, and in processing of pre-tRNAs, pre-rRNAs and U3 snoRNA. The sequence is that of U6 snRNA-associated Sm-like protein LSm6 (snr-6) from Neurospora crassa (strain ATCC 24698 / 74-OR23-1A / CBS 708.71 / DSM 1257 / FGSC 987).